A 128-amino-acid chain; its full sequence is Mediator of RNA polymerase II transcription subunit 31-A (128 aa).

This sequence belongs to the Mediator complex subunit 31 family. Component of the Mediator complex.

It is found in the nucleus. Functionally, component of the Mediator complex, a coactivator involved in the regulated transcription of nearly all RNA polymerase II-dependent genes. Mediator functions as a bridge to convey information from gene-specific regulatory proteins to the basal RNA polymerase II transcription machinery. Mediator is recruited to promoters by direct interactions with regulatory proteins and serves as a scaffold for the assembly of a functional preinitiation complex with RNA polymerase II and the general transcription factors. In Xenopus laevis (African clawed frog), this protein is Mediator of RNA polymerase II transcription subunit 31-A (med31-a).